Here is a 421-residue protein sequence, read N- to C-terminus: UDP-N-acetylglucosamine 1-carboxyvinyltransferase 2 (421 aa).

A phosphoenolpyruvate-binding site is contributed by 22 to 23; that stretch reads KN. Arg95 lines the UDP-N-acetyl-alpha-D-glucosamine pocket. The active-site Proton donor is the Cys119. Residue Cys119 is modified to 2-(S-cysteinyl)pyruvic acid O-phosphothioketal. UDP-N-acetyl-alpha-D-glucosamine contacts are provided by residues 124–128, Asp308, and Val330; that span reads RPIEQ.

This sequence belongs to the EPSP synthase family. MurA subfamily.

The protein localises to the cytoplasm. It catalyses the reaction phosphoenolpyruvate + UDP-N-acetyl-alpha-D-glucosamine = UDP-N-acetyl-3-O-(1-carboxyvinyl)-alpha-D-glucosamine + phosphate. The protein operates within cell wall biogenesis; peptidoglycan biosynthesis. Its function is as follows. Cell wall formation. Adds enolpyruvyl to UDP-N-acetylglucosamine. This chain is UDP-N-acetylglucosamine 1-carboxyvinyltransferase 2, found in Staphylococcus saprophyticus subsp. saprophyticus (strain ATCC 15305 / DSM 20229 / NCIMB 8711 / NCTC 7292 / S-41).